Here is an 81-residue protein sequence, read N- to C-terminus: Conotoxin ArMKLT2-01 (81 aa).

An N-terminal signal peptide occupies residues 1 to 19; it reads MKLTCVIIVVALFLTACHA. Residues 20–43 constitute a propeptide that is removed on maturation; it reads KDKQEHPAVRGSDDMQDSEDLKLA. Disulfide bonds link C46–C61, C53–C65, and C60–C74.

The protein belongs to the conotoxin O1 superfamily. Expressed by the venom duct.

The protein resides in the secreted. The polypeptide is Conotoxin ArMKLT2-01 (Conus arenatus (Sand-dusted cone)).